We begin with the raw amino-acid sequence, 179 residues long: Large ribosomal subunit protein uL6 (179 aa).

This sequence belongs to the universal ribosomal protein uL6 family. In terms of assembly, part of the 50S ribosomal subunit.

Its function is as follows. This protein binds to the 23S rRNA, and is important in its secondary structure. It is located near the subunit interface in the base of the L7/L12 stalk, and near the tRNA binding site of the peptidyltransferase center. This is Large ribosomal subunit protein uL6 from Rhodococcus jostii (strain RHA1).